The chain runs to 157 residues: Transcriptional repressor NrdR (157 aa).

The segment at 3–34 (CPKCNSTHSRVVDSRHADEANAIRRRRECENC) is a zinc-finger region. The ATP-cone domain occupies 49–139 (LIVVKKDGTR…VYKEFKDVDQ (91 aa)).

The protein belongs to the NrdR family. Requires Zn(2+) as cofactor.

Its function is as follows. Negatively regulates transcription of bacterial ribonucleotide reductase nrd genes and operons by binding to NrdR-boxes. The sequence is that of Transcriptional repressor NrdR from Staphylococcus carnosus (strain TM300).